We begin with the raw amino-acid sequence, 307 residues long: Transcription factor MYB78 (307 aa).

2 consecutive HTH myb-type domains span residues 23–79 and 80–130; these read EMDV…RPDV and RRGN…QKHA. 2 consecutive DNA-binding regions (H-T-H motif) follow at residues 51 to 75 and 103 to 126; these read WNSLARCAELKRTGKSCRLRWLNYL and WSKIAQYLPGRTDNEIKNYWRTRV.

The protein resides in the nucleus. In Arabidopsis thaliana (Mouse-ear cress), this protein is Transcription factor MYB78.